A 45-amino-acid chain; its full sequence is Large ribosomal subunit protein bL34 (45 aa).

Residues 23 to 45 are disordered; it reads ETPGGKKVLSARRAKGRKNLIAK. The span at 31–45 shows a compositional bias: basic residues; that stretch reads LSARRAKGRKNLIAK.

Belongs to the bacterial ribosomal protein bL34 family.

This is Large ribosomal subunit protein bL34 from Elusimicrobium minutum (strain Pei191).